The sequence spans 485 residues: Pumilio domain-containing protein 6 (485 aa).

Disordered stretches follow at residues 29-48 (NKTHKNKNPKPPVKLLPYRH) and 55-76 (SDLDNYIFNSGSGSSDDETPPP). Polar residues predominate over residues 55-68 (SDLDNYIFNSGSGS). Pumilio repeat units follow at residues 86–124 (EVLLNGLLIDFAIDPSGVKFLEANYPLDSEDQIRKAVFE), 125–163 (KLTESTTLFVGLCHSRNGNFIVQKLVELATPAEQRELLR), 164–200 (QMIDGGLLVMCKDKFACRVVQLALQKFDHSNVFQLIQ), 201–236 (ELSTFDLAAMCTDQISIHVIQRVVKQLPVDMWTFFV), 237–279 (HFLS…FRIQ), 287–324 (CIVRNCYRLSSNEFANYVIQYVIKSSGIMEMYRDTIID), 326–361 (CLLRNLLSMSQDKYASHVIEGAFLFAPPALLHEMME), and 372–411 (ELNRDALDILLFHQYGNYVVQQMISICTAALIGKEERQLP). The segment at 439 to 454 (FSSGKKIIDSVMRHGV) is RNA-binding.

RNA-binding protein that binds to the consensus sequence 5'-CUCUGUAUCUUGU-3' in mRNA 3'-UTRs and modulates mRNA expression and stability. Functions redundantly with puf-5 and puf-7 in oocyte formation and organization, early embryonic cell divisions, and repression of expression of glp-1 and other maternal mRNAs in late oogenesis. The protein is Pumilio domain-containing protein 6 of Caenorhabditis elegans.